A 138-amino-acid chain; its full sequence is Nucleoside diphosphate kinase (138 aa).

K9, F57, R85, T91, R102, and N112 together coordinate ATP. Catalysis depends on H115, which acts as the Pros-phosphohistidine intermediate.

It belongs to the NDK family. In terms of assembly, homotetramer. It depends on Mg(2+) as a cofactor.

It is found in the cytoplasm. The enzyme catalyses a 2'-deoxyribonucleoside 5'-diphosphate + ATP = a 2'-deoxyribonucleoside 5'-triphosphate + ADP. It carries out the reaction a ribonucleoside 5'-diphosphate + ATP = a ribonucleoside 5'-triphosphate + ADP. Major role in the synthesis of nucleoside triphosphates other than ATP. The ATP gamma phosphate is transferred to the NDP beta phosphate via a ping-pong mechanism, using a phosphorylated active-site intermediate. This is Nucleoside diphosphate kinase from Desulforapulum autotrophicum (strain ATCC 43914 / DSM 3382 / VKM B-1955 / HRM2) (Desulfobacterium autotrophicum).